We begin with the raw amino-acid sequence, 115 residues long: Protein V2 (115 aa).

Belongs to the geminiviridae protein AV2/V2 family. As to quaternary structure, interacts with host SGS3.

It localises to the host cytoplasm. Its subcellular location is the host perinuclear region. Its function is as follows. Through its interaction with host SGS3, acts as a suppressor of RNA-mediated gene silencing, also known as post-transcriptional gene silencing (PTGS), a mechanism of plant viral defense that limits the accumulation of viral RNAs. This Tomato yellow leaf curl China virus (TYLCCNV) protein is Protein V2.